We begin with the raw amino-acid sequence, 328 residues long: Phosphate acyltransferase (328 aa).

It belongs to the PlsX family. Homodimer. Probably interacts with PlsY.

The protein localises to the cytoplasm. It carries out the reaction a fatty acyl-[ACP] + phosphate = an acyl phosphate + holo-[ACP]. It functions in the pathway lipid metabolism; phospholipid metabolism. In terms of biological role, catalyzes the reversible formation of acyl-phosphate (acyl-PO(4)) from acyl-[acyl-carrier-protein] (acyl-ACP). This enzyme utilizes acyl-ACP as fatty acyl donor, but not acyl-CoA. The protein is Phosphate acyltransferase of Mycoplasma pneumoniae (strain ATCC 29342 / M129 / Subtype 1) (Mycoplasmoides pneumoniae).